The following is a 108-amino-acid chain: Acid stress chaperone HdeB (108 aa).

The N-terminal stretch at Met-1–Ala-29 is a signal peptide. Lys-93 bears the N6-acetyllysine mark.

It belongs to the HdeB family.

It localises to the periplasm. Required for optimal acid stress protection, which is important for survival of enteric bacteria in the acidic environment of the host stomach. Exhibits a chaperone-like activity at acidic pH by preventing the aggregation of many different periplasmic proteins. The polypeptide is Acid stress chaperone HdeB (Escherichia coli O6:H1 (strain CFT073 / ATCC 700928 / UPEC)).